Here is a 447-residue protein sequence, read N- to C-terminus: Glutamate-1-semialdehyde 2,1-aminomutase (447 aa).

Residue Lys272 is modified to N6-(pyridoxal phosphate)lysine.

Belongs to the class-III pyridoxal-phosphate-dependent aminotransferase family. HemL subfamily. In terms of assembly, homodimer. It depends on pyridoxal 5'-phosphate as a cofactor.

It is found in the cytoplasm. The enzyme catalyses (S)-4-amino-5-oxopentanoate = 5-aminolevulinate. The protein operates within porphyrin-containing compound metabolism; protoporphyrin-IX biosynthesis; 5-aminolevulinate from L-glutamyl-tRNA(Glu): step 2/2. In Leifsonia xyli subsp. xyli (strain CTCB07), this protein is Glutamate-1-semialdehyde 2,1-aminomutase.